Reading from the N-terminus, the 27-residue chain is Trypsin inhibitor 5 (27 aa).

Disulfide bonds link Cys1/Cys18, Cys8/Cys20, and Cys14/Cys26.

Its subcellular location is the secreted. Inhibits trypsin. The polypeptide is Trypsin inhibitor 5 (Sechium edule (Chayote)).